The sequence spans 124 residues: Acidic phospholipase A2 BA1 (124 aa).

7 cysteine pairs are disulfide-bonded: Cys-26–Cys-116, Cys-28–Cys-44, Cys-43–Cys-95, Cys-49–Cys-124, Cys-50–Cys-88, Cys-57–Cys-81, and Cys-75–Cys-86. Ca(2+) contacts are provided by Tyr-27, Gly-29, and Gly-31. His-47 is an active-site residue. Asp-48 lines the Ca(2+) pocket. Asp-89 is an active-site residue.

The protein belongs to the phospholipase A2 family. Group II subfamily. D49 sub-subfamily. It depends on Ca(2+) as a cofactor. As to expression, expressed by the venom gland.

It localises to the secreted. It catalyses the reaction a 1,2-diacyl-sn-glycero-3-phosphocholine + H2O = a 1-acyl-sn-glycero-3-phosphocholine + a fatty acid + H(+). Its function is as follows. PLA2 catalyzes the calcium-dependent hydrolysis of the 2-acyl groups in 3-sn-phosphoglycerides. This chain is Acidic phospholipase A2 BA1, found in Gloydius halys (Chinese water mocassin).